The primary structure comprises 218 residues: Eukaryotic translation initiation factor 4E-1 (218 aa).

Residues M1–Q11 are compositionally biased toward basic and acidic residues. Disordered stretches follow at residues M1–Q20 and F198–V218. The segment covering K206–V218 has biased composition (polar residues).

This sequence belongs to the eukaryotic initiation factor 4E family. In terms of assembly, eIF4F is a multi-subunit complex, the composition of which varies with external and internal environmental conditions. It is composed of at least eIF4A, eIF4E and eIF4G. eIF4E is also known to interact with other partners.

Functionally, recognizes and binds the 7-methylguanosine-containing mRNA cap during an early step in the initiation of protein synthesis and facilitates ribosome binding by inducing the unwinding of the mRNAs secondary structures. The sequence is that of Eukaryotic translation initiation factor 4E-1 (tif451) from Schizosaccharomyces pombe (strain 972 / ATCC 24843) (Fission yeast).